Consider the following 660-residue polypeptide: UvrABC system protein B (660 aa).

Residues 24 to 177 form the Helicase ATP-binding domain; that stretch reads KGFKEGNQFE…DDLARALIDL (154 aa). ATP is bound at residue 37–44; the sequence is GVTGSGKT. The Beta-hairpin signature appears at 90-113; that stretch reads YYDYYQPEAYVPQSDTYIAKDSSV. The Helicase C-terminal domain maps to 428–594; it reads QIDDLVSEVN…TIQKSVRDLI (167 aa). The UVR domain maps to 620 to 655; sequence EKHIADIEKKMKKAAAELNFEAAAEYRDKLIMLKNT.

Belongs to the UvrB family. Forms a heterotetramer with UvrA during the search for lesions. Interacts with UvrC in an incision complex.

The protein resides in the cytoplasm. Functionally, the UvrABC repair system catalyzes the recognition and processing of DNA lesions. A damage recognition complex composed of 2 UvrA and 2 UvrB subunits scans DNA for abnormalities. Upon binding of the UvrA(2)B(2) complex to a putative damaged site, the DNA wraps around one UvrB monomer. DNA wrap is dependent on ATP binding by UvrB and probably causes local melting of the DNA helix, facilitating insertion of UvrB beta-hairpin between the DNA strands. Then UvrB probes one DNA strand for the presence of a lesion. If a lesion is found the UvrA subunits dissociate and the UvrB-DNA preincision complex is formed. This complex is subsequently bound by UvrC and the second UvrB is released. If no lesion is found, the DNA wraps around the other UvrB subunit that will check the other stand for damage. The protein is UvrABC system protein B of Agathobacter rectalis (strain ATCC 33656 / DSM 3377 / JCM 17463 / KCTC 5835 / VPI 0990) (Eubacterium rectale).